The sequence spans 367 residues: Peptide chain release factor 2 (367 aa).

Glutamine 254 is modified (N5-methylglutamine).

It belongs to the prokaryotic/mitochondrial release factor family. Post-translationally, methylated by PrmC. Methylation increases the termination efficiency of RF2.

The protein resides in the cytoplasm. In terms of biological role, peptide chain release factor 2 directs the termination of translation in response to the peptide chain termination codons UGA and UAA. This chain is Peptide chain release factor 2, found in Neisseria meningitidis serogroup B (strain ATCC BAA-335 / MC58).